Here is a 445-residue protein sequence, read N- to C-terminus: Mitochondrial enolase superfamily member 1 (445 aa).

Residues 24–26, Tyr-34, and Lys-220 contribute to the substrate site; that span reads GSD. Lys-222 functions as the Proton donor/acceptor in the catalytic mechanism. Residue Asp-250 participates in Mg(2+) binding. Substrate is bound by residues Asn-252, Glu-276, Glu-305, 355 to 357, and Glu-386; that span reads HAG. Residues Glu-276 and Glu-305 each contribute to the Mg(2+) site. His-355 is a catalytic residue.

Belongs to the mandelate racemase/muconate lactonizing enzyme family. ENOSF1 subfamily. Requires Mg(2+) as cofactor.

It localises to the mitochondrion. The catalysed reaction is L-fuconate = 2-dehydro-3-deoxy-L-fuconate + H2O. Functionally, plays a role in the catabolism of L-fucose, a sugar that is part of the carbohydrates that are attached to cellular glycoproteins. Catalyzes the dehydration of L-fuconate to 2-keto-3-deoxy-L-fuconate by the abstraction of the 2-proton to generate an enediolate intermediate that is stabilized by the magnesium ion. May down-regulate thymidylate synthase activity, possibly already at the RNA level, by promoting the degradation of TYMS mRNA via an antisense RNA-based mechanism. This chain is Mitochondrial enolase superfamily member 1 (enosf1), found in Xenopus laevis (African clawed frog).